The sequence spans 314 residues: 3'-5' exoribonuclease YhaM (314 aa).

In terms of domain architecture, HD spans 163-279 (HVVSMLNLAK…LHYIDNLDAK (117 aa)).

Belongs to the YhaM family.

Its function is as follows. Shows a 3'-5' exoribonuclease activity. The protein is 3'-5' exoribonuclease YhaM of Bacillus velezensis (strain DSM 23117 / BGSC 10A6 / LMG 26770 / FZB42) (Bacillus amyloliquefaciens subsp. plantarum).